Consider the following 309-residue polypeptide: N(5)-(carboxyethyl)ornithine synthase (309 aa).

Pyruvate contacts are provided by Arg-15, Lys-71, and His-92. 171 to 176 (GSGNVA) is an NADP(+) binding site.

It belongs to the AlaDH/PNT family. CEOS subfamily. Homotetramer.

It catalyses the reaction N(5)-[1(S)-1-carboxyethyl]-L-ornithine + NADP(+) + H2O = L-ornithine + pyruvate + NADPH + H(+). In terms of biological role, catalyzes the NADPH-dependent reductive condensation between pyruvic acid and the side chain amino group of L-ornithine to form N(5)-(L-1-carboxyethyl)-L-ornithine. To a lesser extent, can also use L-lysine as substrate (yielding N(6)-(L-1-carboxyethyl)-L-lysine). In Lactococcus lactis subsp. lactis (strain IL1403) (Streptococcus lactis), this protein is N(5)-(carboxyethyl)ornithine synthase (ceo).